The following is a 96-amino-acid chain: Aspartyl/glutamyl-tRNA(Asn/Gln) amidotransferase subunit C (96 aa).

The protein belongs to the GatC family. Heterotrimer of A, B and C subunits.

It catalyses the reaction L-glutamyl-tRNA(Gln) + L-glutamine + ATP + H2O = L-glutaminyl-tRNA(Gln) + L-glutamate + ADP + phosphate + H(+). It carries out the reaction L-aspartyl-tRNA(Asn) + L-glutamine + ATP + H2O = L-asparaginyl-tRNA(Asn) + L-glutamate + ADP + phosphate + 2 H(+). Functionally, allows the formation of correctly charged Asn-tRNA(Asn) or Gln-tRNA(Gln) through the transamidation of misacylated Asp-tRNA(Asn) or Glu-tRNA(Gln) in organisms which lack either or both of asparaginyl-tRNA or glutaminyl-tRNA synthetases. The reaction takes place in the presence of glutamine and ATP through an activated phospho-Asp-tRNA(Asn) or phospho-Glu-tRNA(Gln). The chain is Aspartyl/glutamyl-tRNA(Asn/Gln) amidotransferase subunit C from Trichormus variabilis (strain ATCC 29413 / PCC 7937) (Anabaena variabilis).